The following is a 267-amino-acid chain: Urease accessory protein UreD 2 (267 aa).

This sequence belongs to the UreD family. In terms of assembly, ureD, UreF and UreG form a complex that acts as a GTP-hydrolysis-dependent molecular chaperone, activating the urease apoprotein by helping to assemble the nickel containing metallocenter of UreC. The UreE protein probably delivers the nickel.

The protein localises to the cytoplasm. Required for maturation of urease via the functional incorporation of the urease nickel metallocenter. This chain is Urease accessory protein UreD 2, found in Synechococcus sp. (strain JA-3-3Ab) (Cyanobacteria bacterium Yellowstone A-Prime).